Consider the following 290-residue polypeptide: Ribosomal RNA small subunit methyltransferase A (290 aa).

6 residues coordinate S-adenosyl-L-methionine: Asn27, Leu29, Gly54, Glu75, Asp100, and Asn125.

This sequence belongs to the class I-like SAM-binding methyltransferase superfamily. rRNA adenine N(6)-methyltransferase family. RsmA subfamily.

Its subcellular location is the cytoplasm. It catalyses the reaction adenosine(1518)/adenosine(1519) in 16S rRNA + 4 S-adenosyl-L-methionine = N(6)-dimethyladenosine(1518)/N(6)-dimethyladenosine(1519) in 16S rRNA + 4 S-adenosyl-L-homocysteine + 4 H(+). Functionally, specifically dimethylates two adjacent adenosines (A1518 and A1519) in the loop of a conserved hairpin near the 3'-end of 16S rRNA in the 30S particle. May play a critical role in biogenesis of 30S subunits. This chain is Ribosomal RNA small subunit methyltransferase A, found in Streptococcus pneumoniae (strain JJA).